The primary structure comprises 95 residues: Small ribosomal subunit protein uS19 (95 aa).

Belongs to the universal ribosomal protein uS19 family.

Functionally, protein S19 forms a complex with S13 that binds strongly to the 16S ribosomal RNA. This Chloroflexus aurantiacus (strain ATCC 29366 / DSM 635 / J-10-fl) protein is Small ribosomal subunit protein uS19.